The chain runs to 85 residues: Large ribosomal subunit protein bL27 (85 aa).

The interval 1–21 (MAHKKAGGSSRNGRDSEAKRL) is disordered.

Belongs to the bacterial ribosomal protein bL27 family.

The polypeptide is Large ribosomal subunit protein bL27 (Aeromonas hydrophila subsp. hydrophila (strain ATCC 7966 / DSM 30187 / BCRC 13018 / CCUG 14551 / JCM 1027 / KCTC 2358 / NCIMB 9240 / NCTC 8049)).